A 626-amino-acid polypeptide reads, in one-letter code: ATP-dependent zinc metalloprotease FtsH (626 aa).

Residues 1-7 (MNGNRPN) lie on the Cytoplasmic side of the membrane. The helical transmembrane segment at 8–28 (YISLIFAALVILSLFWLVRSF) threads the bilayer. Over 29 to 108 (YFDTSAPSKM…VTGEKGVSSS (80 aa)) the chain is Periplasmic. Residues 109–129 (FWVNVIGNVIFIGFLLFMFFF) form a helical membrane-spanning segment. At 130–626 (MMRTISGRNN…RAAAGSEQDS (497 aa)) the chain is on the cytoplasmic side. Residue 202–209 (GPPGTGKT) participates in ATP binding. H424 contributes to the Zn(2+) binding site. E425 is an active-site residue. Residues H428 and D501 each coordinate Zn(2+).

This sequence in the central section; belongs to the AAA ATPase family. The protein in the C-terminal section; belongs to the peptidase M41 family. As to quaternary structure, homohexamer. Zn(2+) is required as a cofactor.

The protein localises to the cell inner membrane. In terms of biological role, acts as a processive, ATP-dependent zinc metallopeptidase for both cytoplasmic and membrane proteins. Plays a role in the quality control of integral membrane proteins. The protein is ATP-dependent zinc metalloprotease FtsH of Pseudothermotoga lettingae (strain ATCC BAA-301 / DSM 14385 / NBRC 107922 / TMO) (Thermotoga lettingae).